Reading from the N-terminus, the 236-residue chain is Uridylate kinase (236 aa).

Residue 9–12 (KISG) participates in ATP binding. Position 51 (G51) interacts with UMP. ATP is bound by residues G52 and R56. Residues D71 and 132–139 (TGNSHFTT) contribute to the UMP site. Positions 166 and 169 each coordinate ATP.

Belongs to the UMP kinase family. As to quaternary structure, homohexamer.

The protein resides in the cytoplasm. It catalyses the reaction UMP + ATP = UDP + ADP. It participates in pyrimidine metabolism; CTP biosynthesis via de novo pathway; UDP from UMP (UMPK route): step 1/1. With respect to regulation, inhibited by UTP. Its function is as follows. Catalyzes the reversible phosphorylation of UMP to UDP. This Mycoplasmoides gallisepticum (strain R(low / passage 15 / clone 2)) (Mycoplasma gallisepticum) protein is Uridylate kinase.